The chain runs to 81 residues: FASAGPETLCGAELVDALQFVCGDRGFYFNKPTGYGSSSRRAPQTGIVDECCFRSCDLRRLEMYCAPLKPAKAARSVRAQR.

Positions 1 to 4 (FASA) are excised as a propeptide. The tract at residues 5–33 (GPETLCGAELVDALQFVCGDRGFYFNKPT) is b. 3 cysteine pairs are disulfide-bonded: cysteine 10–cysteine 52, cysteine 22–cysteine 65, and cysteine 51–cysteine 56. The c stretch occupies residues 34 to 45 (GYGSSSRRAPQT). The a stretch occupies residues 46 to 66 (GIVDECCFRSCDLRRLEMYCA). The d stretch occupies residues 67-74 (PLKPAKAA). A propeptide spans 75–81 (RSVRAQR) (e peptide).

Belongs to the insulin family. In terms of assembly, forms a ternary complex with IGFR1 and ITGAV:ITGB3. Forms a ternary complex with IGFR1 and ITGA6:ITGB4.

Its subcellular location is the secreted. Functionally, the insulin-like growth factors, isolated from plasma, are structurally and functionally related to insulin but have a much higher growth-promoting activity. May be a physiological regulator of [1-14C]-2-deoxy-D-glucose (2DG) transport and glycogen synthesis in osteoblasts. Stimulates glucose transport in bone-derived osteoblastic (PyMS) cells and is effective at much lower concentrations than insulin, not only regarding glycogen and DNA synthesis but also with regard to enhancing glucose uptake. May play a role in synapse maturation. Ca(2+)-dependent exocytosis of IGF1 is required for sensory perception of smell in the olfactory bulb. Acts as a ligand for IGF1R. Binds to the alpha subunit of IGF1R, leading to the activation of the intrinsic tyrosine kinase activity which autophosphorylates tyrosine residues in the beta subunit thus initiating a cascade of down-stream signaling events leading to activation of the PI3K-AKT/PKB and the Ras-MAPK pathways. Binds to integrins ITGAV:ITGB3 and ITGA6:ITGB4. Its binding to integrins and subsequent ternary complex formation with integrins and IGFR1 are essential for IGF1 signaling. Induces the phosphorylation and activation of IGFR1, MAPK3/ERK1, MAPK1/ERK2 and AKT1. As part of the MAPK/ERK signaling pathway, acts as a negative regulator of apoptosis in cardiomyocytes via promotion of STUB1/CHIP-mediated ubiquitination and degradation of ICER-type isoforms of CREM. This Suncus murinus (Asian house shrew) protein is Insulin-like growth factor 1.